Consider the following 128-residue polypeptide: Aspartate 1-decarboxylase (128 aa).

S25 acts as the Schiff-base intermediate with substrate; via pyruvic acid in catalysis. S25 bears the Pyruvic acid (Ser) mark. A substrate-binding site is contributed by T57. Y58 serves as the catalytic Proton donor. 73-75 is a binding site for substrate; sequence GSA.

The protein belongs to the PanD family. Heterooctamer of four alpha and four beta subunits. The cofactor is pyruvate. In terms of processing, is synthesized initially as an inactive proenzyme, which is activated by self-cleavage at a specific serine bond to produce a beta-subunit with a hydroxyl group at its C-terminus and an alpha-subunit with a pyruvoyl group at its N-terminus.

The protein resides in the cytoplasm. It catalyses the reaction L-aspartate + H(+) = beta-alanine + CO2. Its pathway is cofactor biosynthesis; (R)-pantothenate biosynthesis; beta-alanine from L-aspartate: step 1/1. Its function is as follows. Catalyzes the pyruvoyl-dependent decarboxylation of aspartate to produce beta-alanine. This Burkholderia pseudomallei (strain 668) protein is Aspartate 1-decarboxylase.